We begin with the raw amino-acid sequence, 288 residues long: 4-diphosphocytidyl-2-C-methyl-D-erythritol kinase (288 aa).

Lys-13 is an active-site residue. 96–106 (PMGGGIGGGSS) is a binding site for ATP. Asp-138 is a catalytic residue.

This sequence belongs to the GHMP kinase family. IspE subfamily.

It carries out the reaction 4-CDP-2-C-methyl-D-erythritol + ATP = 4-CDP-2-C-methyl-D-erythritol 2-phosphate + ADP + H(+). Its pathway is isoprenoid biosynthesis; isopentenyl diphosphate biosynthesis via DXP pathway; isopentenyl diphosphate from 1-deoxy-D-xylulose 5-phosphate: step 3/6. Its function is as follows. Catalyzes the phosphorylation of the position 2 hydroxy group of 4-diphosphocytidyl-2C-methyl-D-erythritol. This is 4-diphosphocytidyl-2-C-methyl-D-erythritol kinase from Aliivibrio fischeri (strain ATCC 700601 / ES114) (Vibrio fischeri).